The following is an 896-amino-acid chain: Histone-lysine N-methyltransferase CLF (896 aa).

Disordered stretches follow at residues 344–419 (DNLK…NRRI) and 459–514 (SGIK…DGCD). A compositionally biased stretch (low complexity) spans 358-390 (GSSGQKTKSQQSESSSTARVSSESSESEVQLLS). 3 stretches are compositionally biased toward polar residues: residues 391–400 (NKSPQHSPGL), 465–476 (VVSSQCNSPSTR), and 485–498 (QMENNSSFVDAQSD). The span at 504-514 (NNEHSATDGCD) shows a compositional bias: basic and acidic residues. In terms of domain architecture, CXC spans 633 to 732 (RKRITERKDQ…TLGVPNQRGD (100 aa)). The SET domain maps to 747 to 862 (QRVLLGRSDV…AGEELFYDYR (116 aa)). Position 861 (Tyr-861) interacts with S-adenosyl-L-methionine. Residues 869–884 (PAWARKPEGPGAKDDA) show a composition bias toward basic and acidic residues. Positions 869 to 896 (PAWARKPEGPGAKDDAQPSTGRAKKLAH) are disordered.

This sequence belongs to the class V-like SAM-binding methyltransferase superfamily. Histone-lysine methyltransferase family. EZ subfamily. As to quaternary structure, interacts with FIE1. Component of the polycomb repressive complex 2 (PRC2), composed of the core PRC2 components FIE2, EMF2B and EZ1. PRC2 methylates 'Lys-27' residues of histone H3 (H3K27me3), leading to transcriptional repression of the affected target gene. In terms of tissue distribution, widely expressed. Highly expressed in young panicle.

It catalyses the reaction L-lysyl(27)-[histone H3] + 3 S-adenosyl-L-methionine = N(6),N(6),N(6)-trimethyl-L-lysyl(27)-[histone H3] + 3 S-adenosyl-L-homocysteine + 3 H(+). Functionally, polycomb group (PcG) protein. Catalytic subunit of some PcG multiprotein complex, which methylates 'Lys-27' of histone H3, leading to transcriptional repression of the affected target genes. PcG proteins act by forming multiprotein complexes, which are required to maintain the transcriptionally repressive state of homeotic genes throughout development. PcG proteins are not required to initiate repression, but to maintain it during later stages of development. Involved in the regulation of flowering. Represses flowering under long day (LD) conditions. Regulates the trimethylation on histone H3 'Lys-27' (H3K27me3) of the flowering regulators MADS14, MADS15, RFT1, EHD1, HD3A and LF. This is Histone-lysine N-methyltransferase CLF from Oryza sativa subsp. japonica (Rice).